The following is a 523-amino-acid chain: 2-isopropylmalate synthase (523 aa).

The 263-residue stretch at 5-267 (VIIFDTTLRD…HTAINHQEIW (263 aa)) folds into the Pyruvate carboxyltransferase domain. Asp14, His202, His204, and Asn238 together coordinate Mn(2+). Positions 392-523 (RLDYFSVQSG…QHNENNKETV (132 aa)) are regulatory domain.

This sequence belongs to the alpha-IPM synthase/homocitrate synthase family. LeuA type 1 subfamily. As to quaternary structure, homodimer. Requires Mn(2+) as cofactor.

The protein localises to the cytoplasm. It carries out the reaction 3-methyl-2-oxobutanoate + acetyl-CoA + H2O = (2S)-2-isopropylmalate + CoA + H(+). The protein operates within amino-acid biosynthesis; L-leucine biosynthesis; L-leucine from 3-methyl-2-oxobutanoate: step 1/4. Catalyzes the condensation of the acetyl group of acetyl-CoA with 3-methyl-2-oxobutanoate (2-ketoisovalerate) to form 3-carboxy-3-hydroxy-4-methylpentanoate (2-isopropylmalate). The chain is 2-isopropylmalate synthase from Shigella sonnei (strain Ss046).